We begin with the raw amino-acid sequence, 164 residues long: Cell division protein SepF (164 aa).

The interval 21 to 71 (YQQGQQPAQQQQSPVQAVPTPVPAPQQQAKRAPVTPLHKPSTTTRNAAPAE) is disordered. The segment covering 22-49 (QQGQQPAQQQQSPVQAVPTPVPAPQQQA) has biased composition (low complexity).

The protein belongs to the SepF family. As to quaternary structure, homodimer. Interacts with FtsZ.

It is found in the cytoplasm. Cell division protein that is part of the divisome complex and is recruited early to the Z-ring. Probably stimulates Z-ring formation, perhaps through the cross-linking of FtsZ protofilaments. Its function overlaps with FtsA. The sequence is that of Cell division protein SepF from Clavibacter sepedonicus (Clavibacter michiganensis subsp. sepedonicus).